The following is a 309-amino-acid chain: Ribonuclease Z (309 aa).

Zn(2+) is bound by residues H63, H65, D67, H68, H145, D216, and H274. Catalysis depends on D67, which acts as the Proton acceptor.

This sequence belongs to the RNase Z family. In terms of assembly, homodimer. Zn(2+) is required as a cofactor.

The catalysed reaction is Endonucleolytic cleavage of RNA, removing extra 3' nucleotides from tRNA precursor, generating 3' termini of tRNAs. A 3'-hydroxy group is left at the tRNA terminus and a 5'-phosphoryl group is left at the trailer molecule.. Functionally, zinc phosphodiesterase, which displays some tRNA 3'-processing endonuclease activity. Probably involved in tRNA maturation, by removing a 3'-trailer from precursor tRNA. The polypeptide is Ribonuclease Z (Streptococcus agalactiae serotype V (strain ATCC BAA-611 / 2603 V/R)).